A 326-amino-acid polypeptide reads, in one-letter code: N-(2-amino-2-carboxyethyl)-L-glutamate synthase (326 aa).

Lys47 bears the N6-(pyridoxal phosphate)lysine mark. Residues Asn77, 185–189 (STTGS), and Ser272 each bind pyridoxal 5'-phosphate.

It belongs to the cysteine synthase/cystathionine beta-synthase family. SbnA subfamily. As to quaternary structure, homodimer. Requires pyridoxal 5'-phosphate as cofactor.

The catalysed reaction is O-phospho-L-serine + L-glutamate = N-[(2S)-2-amino-2-carboxyethyl]-L-glutamate + phosphate + H(+). Its pathway is siderophore biosynthesis. Functionally, catalyzes the synthesis of N-((2S)-2-amino-2-carboxyethyl)-L-glutamate (ACEGA) from O-phospho-L-serine and L-glutamate. Involved in the biosynthesis of L-2,3-diaminopropionic acid (L-Dap), a precursor of staphyloferrin B and antibiotics. This chain is N-(2-amino-2-carboxyethyl)-L-glutamate synthase (sbnA), found in Staphylococcus aureus (strain N315).